Consider the following 876-residue polypeptide: Neurotrypsin (876 aa).

An N-terminal signal peptide occupies residues 1–20 (MTLARFVLALMLGALPEVVG). A glycan (N-linked (GlcNAc...) asparagine) is linked at Asn-26. The disordered stretch occupies residues 29–89 (LHHSHRHSPP…ALQAGHTPRP (61 aa)). Low complexity predominate over residues 43–54 (YPSYYLPTQQRP). Residues 57-72 (TRPPPPLPRFPRPPRA) show a composition bias toward pro residues. The Kringle domain occupies 94–166 (CPAGEPWVSV…GKVDWGYCDC (73 aa)). 20 cysteine pairs are disulfide-bonded: Cys-94-Cys-166, Cys-110-Cys-150, Cys-139-Cys-164, Cys-196-Cys-260, Cys-209-Cys-270, Cys-240-Cys-250, Cys-306-Cys-370, Cys-319-Cys-380, Cys-350-Cys-360, Cys-413-Cys-476, Cys-426-Cys-486, Cys-456-Cys-466, Cys-526-Cys-590, Cys-539-Cys-600, Cys-570-Cys-580, Cys-620-Cys-751, Cys-662-Cys-678, Cys-766-Cys-832, Cys-795-Cys-809, and Cys-822-Cys-851. SRCR domains lie at 171–272 (VRLR…TCSF), 281–382 (IRLA…SCTP), 388–488 (IRLA…ACYP), and 501–602 (VRLM…ICDY). Positions 620–631 (CGLRLLHRRQKR) are zymogen activation region. In terms of domain architecture, Peptidase S1 spans 632–875 (IIGGKNSLRG…FVPWIKSVTK (244 aa)). His-677 (charge relay system) is an active-site residue. N-linked (GlcNAc...) asparagine glycosylation is present at Asn-684. Asp-727 (charge relay system) is an active-site residue. Ser-826 functions as the Charge relay system in the catalytic mechanism.

Belongs to the peptidase S1 family.

Its subcellular location is the secreted. Its function is as follows. Plays a role in neuronal plasticity and the proteolytic action may subserve structural reorganizations associated with learning and memory operations. The sequence is that of Neurotrypsin (PRSS12) from Gorilla gorilla gorilla (Western lowland gorilla).